Consider the following 205-residue polypeptide: Small ribosomal subunit protein uS4 (205 aa).

The disordered stretch occupies residues 1–46; it reads MSKRHSAKYKIDRRMGENLWGRPKSPVNSRSYGPGQHGQRRKSKVS. The S4 RNA-binding domain maps to 94 to 154; that stretch reads SRLDAIVYRA…EKSRNMALVL (61 aa).

This sequence belongs to the universal ribosomal protein uS4 family. As to quaternary structure, part of the 30S ribosomal subunit. Contacts protein S5. The interaction surface between S4 and S5 is involved in control of translational fidelity.

Its function is as follows. One of the primary rRNA binding proteins, it binds directly to 16S rRNA where it nucleates assembly of the body of the 30S subunit. Functionally, with S5 and S12 plays an important role in translational accuracy. The sequence is that of Small ribosomal subunit protein uS4 from Caulobacter vibrioides (strain ATCC 19089 / CIP 103742 / CB 15) (Caulobacter crescentus).